Here is a 407-residue protein sequence, read N- to C-terminus: Nicotinate phosphoribosyltransferase (407 aa).

A Phosphohistidine; by autocatalysis modification is found at His224.

This sequence belongs to the NAPRTase family. Post-translationally, transiently phosphorylated on a His residue during the reaction cycle. Phosphorylation strongly increases the affinity for substrates and increases the rate of nicotinate D-ribonucleotide production. Dephosphorylation regenerates the low-affinity form of the enzyme, leading to product release.

It catalyses the reaction nicotinate + 5-phospho-alpha-D-ribose 1-diphosphate + ATP + H2O = nicotinate beta-D-ribonucleotide + ADP + phosphate + diphosphate. The protein operates within cofactor biosynthesis; NAD(+) biosynthesis; nicotinate D-ribonucleotide from nicotinate: step 1/1. Catalyzes the synthesis of beta-nicotinate D-ribonucleotide from nicotinate and 5-phospho-D-ribose 1-phosphate at the expense of ATP. In Pseudomonas syringae pv. tomato (strain ATCC BAA-871 / DC3000), this protein is Nicotinate phosphoribosyltransferase.